A 268-amino-acid chain; its full sequence is Basic endochitinase CHB4 (268 aa).

An N-terminal signal peptide occupies residues 1–24 (MALTKLSLVLFLCFLGLYSETVKS). The 35-residue stretch at 25-59 (QNCGCAPNLCCSQFGYCGSTDAYCGTGCRSGPCRS) folds into the Chitin-binding type-1 domain. Disulfide bonds link Cys-27–Cys-35, Cys-29–Cys-41, Cys-34–Cys-48, Cys-52–Cys-57, Cys-92–Cys-137, Cys-150–Cys-159, and Cys-236–Cys-268. The interval 71-268 (SVGSIVTQAF…GVDPGPNLSC (198 aa)) is catalytic. Glu-132 functions as the Proton donor in the catalytic mechanism. Residue Asn-265 is glycosylated (N-linked (GlcNAc...) asparagine).

Belongs to the glycosyl hydrolase 19 family. Chitinase class I subfamily.

It is found in the secreted. Its subcellular location is the extracellular space. The enzyme catalyses Random endo-hydrolysis of N-acetyl-beta-D-glucosaminide (1-&gt;4)-beta-linkages in chitin and chitodextrins.. Functionally, defense against chitin-containing fungal pathogens. The polypeptide is Basic endochitinase CHB4 (Brassica napus (Rape)).